The chain runs to 142 residues: Hemoglobin subunit alpha-A (142 aa).

One can recognise a Globin domain in the interval 2-142 (VLSAADKTNV…VATVLTAKYR (141 aa)). H59 provides a ligand contact to O2. H88 provides a ligand contact to heme b.

The protein belongs to the globin family. In terms of assembly, heterotetramer of two alpha chains and two beta chains. In terms of tissue distribution, red blood cells.

In terms of biological role, involved in oxygen transport from the lung to the various peripheral tissues. The polypeptide is Hemoglobin subunit alpha-A (HBAA) (Apus apus (Common swift)).